Reading from the N-terminus, the 295-residue chain is Glutamyl-Q tRNA(Asp) synthetase (295 aa).

L-glutamate-binding positions include 5 to 9 and glutamate 41; that span reads RFAPS. The 'HIGH' region signature appears at 8–18; it reads PSPTGLLHIGS. Residues cysteine 97, cysteine 99, tyrosine 117, and cysteine 121 each coordinate Zn(2+). Residues tyrosine 178 and arginine 196 each contribute to the L-glutamate site. A 'KMSKS' region motif is present at residues 234–238; the sequence is KWSKQ. Residue lysine 237 coordinates ATP.

The protein belongs to the class-I aminoacyl-tRNA synthetase family. GluQ subfamily. Zn(2+) is required as a cofactor.

Functionally, catalyzes the tRNA-independent activation of glutamate in presence of ATP and the subsequent transfer of glutamate onto a tRNA(Asp). Glutamate is transferred on the 2-amino-5-(4,5-dihydroxy-2-cyclopenten-1-yl) moiety of the queuosine in the wobble position of the QUC anticodon. This Neisseria meningitidis serogroup B (strain ATCC BAA-335 / MC58) protein is Glutamyl-Q tRNA(Asp) synthetase.